The following is a 224-amino-acid chain: Large ribosomal subunit protein uL3 (224 aa).

The disordered stretch occupies residues 132 to 153; it reads SQTKTHGTHEYQRHPGAIGQRK.

It belongs to the universal ribosomal protein uL3 family. In terms of assembly, part of the 50S ribosomal subunit. Forms a cluster with proteins L14 and L19.

Functionally, one of the primary rRNA binding proteins, it binds directly near the 3'-end of the 23S rRNA, where it nucleates assembly of the 50S subunit. This chain is Large ribosomal subunit protein uL3, found in Myxococcus xanthus (strain DK1622).